The primary structure comprises 384 residues: Flap endonuclease 1 (384 aa).

The N-domain stretch occupies residues 1–105; sequence MGVKGLNQLI…GELEKRLLKR (105 aa). Asp34 is a binding site for Mg(2+). 2 residues coordinate DNA: Arg47 and Arg71. Mg(2+)-binding residues include Asp87, Glu159, Glu161, Asp180, and Asp182. The I-domain stretch occupies residues 123 to 254; that stretch reads DMTKYQKRLV…VTAYKLIKEH (132 aa). A DNA-binding site is contributed by Glu159. DNA-binding residues include Gly232 and Asp234. A Mg(2+)-binding site is contributed by Asp234. An interaction with PCNA region spans residues 341 to 349; it reads IQGRLDGFF. The interval 354–384 is disordered; the sequence is KYSNTSPLGKDDKKRKTNDKKGAAAKKTKRR. The span at 362–375 shows a compositional bias: basic and acidic residues; that stretch reads GKDDKKRKTNDKKG.

The protein belongs to the XPG/RAD2 endonuclease family. FEN1 subfamily. As to quaternary structure, interacts with PCNA. Three molecules of FEN1 bind to one PCNA trimer with each molecule binding to one PCNA monomer. PCNA stimulates the nuclease activity without altering cleavage specificity. The cofactor is Mg(2+). In terms of processing, phosphorylated. Phosphorylation upon DNA damage induces relocalization to the nuclear plasma.

It localises to the nucleus. The protein localises to the nucleolus. It is found in the nucleoplasm. The protein resides in the mitochondrion. Structure-specific nuclease with 5'-flap endonuclease and 5'-3' exonuclease activities involved in DNA replication and repair. During DNA replication, cleaves the 5'-overhanging flap structure that is generated by displacement synthesis when DNA polymerase encounters the 5'-end of a downstream Okazaki fragment. It enters the flap from the 5'-end and then tracks to cleave the flap base, leaving a nick for ligation. Also involved in the long patch base excision repair (LP-BER) pathway, by cleaving within the apurinic/apyrimidinic (AP) site-terminated flap. Acts as a genome stabilization factor that prevents flaps from equilibrating into structures that lead to duplications and deletions. Also possesses 5'-3' exonuclease activity on nicked or gapped double-stranded DNA, and exhibits RNase H activity. Also involved in replication and repair of rDNA and in repairing mitochondrial DNA. The polypeptide is Flap endonuclease 1 (Lodderomyces elongisporus (strain ATCC 11503 / CBS 2605 / JCM 1781 / NBRC 1676 / NRRL YB-4239) (Yeast)).